A 330-amino-acid chain; its full sequence is Ferredoxin--NADP reductase 2 (330 aa).

The FAD site is built by glutamate 37, glutamine 45, tyrosine 50, valine 90, phenylalanine 124, aspartate 286, and threonine 327.

Belongs to the ferredoxin--NADP reductase type 2 family. As to quaternary structure, homodimer. FAD is required as a cofactor.

The catalysed reaction is 2 reduced [2Fe-2S]-[ferredoxin] + NADP(+) + H(+) = 2 oxidized [2Fe-2S]-[ferredoxin] + NADPH. The sequence is that of Ferredoxin--NADP reductase 2 from Shouchella clausii (strain KSM-K16) (Alkalihalobacillus clausii).